The primary structure comprises 1007 residues: Kinesin-like protein KIN-7D, chloroplastic (1007 aa).

A chloroplast-targeting transit peptide spans 1 to 53 (MATRPASRQRRASSAAAAVAVVRSSPQPQQQQQQQLPIPQSGSPTSTTTTTTS). Low complexity predominate over residues 1-55 (MATRPASRQRRASSAAAAVAVVRSSPQPQQQQQQQLPIPQSGSPTSTTTTTTSSS). Residues 1 to 79 (MATRPASRQR…LFAGLDEDPA (79 aa)) are disordered. The Kinesin motor domain maps to 83 to 402 (NVTVTVRFRP…LKFAHRAKRI (320 aa)). 163–170 (GVTSSGKT) contacts ATP. Residues 403–495 (EVQASQNKII…QRLTKLILVS (93 aa)) are a coiled coil. Positions 579 to 607 (ILTSSEGDKSSLTKSTAPSTPIGESVNFP) are disordered. Coiled-coil stretches lie at residues 687–716 (NNEK…ERQI), 754–791 (AADN…TLQA), and 836–907 (SVEI…SVRS). Residues 901–941 (ELASVRSPTPRRANSGLRGTRRDSISRRHEPAPRRDNNAGY) form a disordered region. Residues 920–941 (TRRDSISRRHEPAPRRDNNAGY) show a composition bias toward basic and acidic residues. Residues 942–982 (EREKALEAVLMEKEQKEAELQRRIEESKQKEAFLESELANM) adopt a coiled-coil conformation.

Belongs to the TRAFAC class myosin-kinesin ATPase superfamily. Kinesin family. KIN-7 subfamily. As to quaternary structure, binds microtubules. Homodimer. It depends on Mg(2+) as a cofactor.

It is found in the plastid. Its subcellular location is the chloroplast. Its function is as follows. Probable minus end-directed motor protein with a microtubule-enhanced ATPase activity. Binds ATP/ADP in vitro. Retains total enzymatic activity even after the removal of the ADP bound in the active site. This chain is Kinesin-like protein KIN-7D, chloroplastic, found in Oryza sativa subsp. japonica (Rice).